The sequence spans 249 residues: Probable WRKY transcription factor 64 (249 aa).

Residues 97–165 (SPTPRPDDGF…YLGKHVCKAV (69 aa)) constitute a DNA-binding region (WRKY).

Belongs to the WRKY group III family.

It localises to the nucleus. Its function is as follows. Transcription factor. Interacts specifically with the W box (5'-(T)TGAC[CT]-3'), a frequently occurring elicitor-responsive cis-acting element. In Arabidopsis thaliana (Mouse-ear cress), this protein is Probable WRKY transcription factor 64 (WRKY64).